The following is a 346-amino-acid chain: tRNA N6-adenosine threonylcarbamoyltransferase (346 aa).

The Fe cation site is built by H111 and H115. Residues 134 to 138 (LVSGG), D167, G180, D184, and N279 each bind substrate. A Fe cation-binding site is contributed by D307.

Belongs to the KAE1 / TsaD family. Requires Fe(2+) as cofactor.

It localises to the cytoplasm. The enzyme catalyses L-threonylcarbamoyladenylate + adenosine(37) in tRNA = N(6)-L-threonylcarbamoyladenosine(37) in tRNA + AMP + H(+). In terms of biological role, required for the formation of a threonylcarbamoyl group on adenosine at position 37 (t(6)A37) in tRNAs that read codons beginning with adenine. Is involved in the transfer of the threonylcarbamoyl moiety of threonylcarbamoyl-AMP (TC-AMP) to the N6 group of A37, together with TsaE and TsaB. TsaD likely plays a direct catalytic role in this reaction. The sequence is that of tRNA N6-adenosine threonylcarbamoyltransferase from Gloeothece citriformis (strain PCC 7424) (Cyanothece sp. (strain PCC 7424)).